The sequence spans 166 residues: CDP-archaeol synthase (166 aa).

Helical transmembrane passes span 7 to 27, 55 to 75, 78 to 98, 116 to 136, and 138 to 158; these read LLLS…GPFI, LIVA…FFTA, TLIS…GAFI, LDFV…ITWY, and FLFI…VAYL.

Belongs to the CDP-archaeol synthase family. It depends on Mg(2+) as a cofactor.

It localises to the cell membrane. It carries out the reaction 2,3-bis-O-(geranylgeranyl)-sn-glycerol 1-phosphate + CTP + H(+) = CDP-2,3-bis-O-(geranylgeranyl)-sn-glycerol + diphosphate. It functions in the pathway membrane lipid metabolism; glycerophospholipid metabolism. Its function is as follows. Catalyzes the formation of CDP-2,3-bis-(O-geranylgeranyl)-sn-glycerol (CDP-archaeol) from 2,3-bis-(O-geranylgeranyl)-sn-glycerol 1-phosphate (DGGGP) and CTP. This reaction is the third ether-bond-formation step in the biosynthesis of archaeal membrane lipids. The sequence is that of CDP-archaeol synthase from Saccharolobus islandicus (strain Y.N.15.51 / Yellowstone #2) (Sulfolobus islandicus).